A 341-amino-acid polypeptide reads, in one-letter code: L-threonine 3-dehydrogenase (341 aa).

Cys-38 provides a ligand contact to Zn(2+). Active-site charge relay system residues include Thr-40 and His-43. His-63, Glu-64, Cys-93, Cys-96, Cys-99, and Cys-107 together coordinate Zn(2+). NAD(+)-binding positions include Ile-175, Asp-195, Arg-200, 262–264 (LGI), and 286–287 (IY).

This sequence belongs to the zinc-containing alcohol dehydrogenase family. In terms of assembly, homotetramer. The cofactor is Zn(2+).

The protein localises to the cytoplasm. It carries out the reaction L-threonine + NAD(+) = (2S)-2-amino-3-oxobutanoate + NADH + H(+). Its pathway is amino-acid degradation; L-threonine degradation via oxydo-reductase pathway; glycine from L-threonine: step 1/2. Catalyzes the NAD(+)-dependent oxidation of L-threonine to 2-amino-3-ketobutyrate. The chain is L-threonine 3-dehydrogenase from Shewanella baltica (strain OS185).